Reading from the N-terminus, the 391-residue chain is Xylose isomerase (391 aa).

Active-site residues include His54 and Asp57. Mg(2+) is bound by residues Glu181, Glu217, His220, Asp245, Asp255, Asp257, and Asp287.

The protein belongs to the xylose isomerase family. In terms of assembly, homotetramer. It depends on Mg(2+) as a cofactor.

The protein localises to the cytoplasm. The catalysed reaction is alpha-D-xylose = alpha-D-xylulofuranose. Functionally, involved in D-xylose catabolism. The polypeptide is Xylose isomerase (xylA) (Streptomyces albus G).